We begin with the raw amino-acid sequence, 618 residues long: UvrABC system protein C (618 aa).

The 79-residue stretch at 15–93 (RTPGVYLMKD…IKEHHPRYNI (79 aa)) folds into the GIY-YIG domain. Residues 203–238 (NNLLRELRERMKMAAEQMNYEEAAFLRDRIRAIEET) enclose the UVR domain.

The protein belongs to the UvrC family. Interacts with UvrB in an incision complex.

The protein resides in the cytoplasm. Its function is as follows. The UvrABC repair system catalyzes the recognition and processing of DNA lesions. UvrC both incises the 5' and 3' sides of the lesion. The N-terminal half is responsible for the 3' incision and the C-terminal half is responsible for the 5' incision. This is UvrABC system protein C from Syntrophus aciditrophicus (strain SB).